The sequence spans 538 residues: Xylosidase/arabinosidase 43B (538 aa).

The active-site Proton donor is the Glu367.

It belongs to the glycosyl hydrolase 43 family.

The enzyme catalyses Hydrolysis of (1-&gt;4)-beta-D-xylans, to remove successive D-xylose residues from the non-reducing termini.. It carries out the reaction Hydrolysis of terminal non-reducing alpha-L-arabinofuranoside residues in alpha-L-arabinosides.. Its activity is regulated as follows. Activity is inhibited by Ag(+), Li(+), Cu(2+), Cr(3+), Co(3+), Ni(2+), Mg(2+), Zn(2+), EDTA, SDS and beta-mercaptoethanol; but not by Mn(2+), Pb(2+), Ca(2+) and Fe(3+). In terms of biological role, bifunctional beta-xylosidase/alpha-L-arabinosidases with a low level of xylanase activity. Is most active on 4-nitrophenyl beta-D-xylopyranoside (pNPX) (defined as 100%), moderate on p-nitrophenyl-alpha-L-arabinofuranoside (pNPA) (56.6%), and weak on beechwood xylan (5.7%) and birchwood xylan (2.7%). Is able to attack xylooligosacchardies with degrees of polymerisation of 2-5, releasing the amounts of reducing sugars in the order of xylopentose &gt; xylotetraose &gt; xylotriose &gt; xylobiose, i.e. the rate of xylose released from xylooligosacchardies increased with the chain length. No activity was detected in the presence of carboxymethyl cellulose-sodium (CMC-Na), sugar beet arabinan, AZCL-arabinan (debranched), 4-nitrophenyl a-D - galactopyranoside, 2-nitrophenyl beta-D-galactopyranoside, and 4-nitrophenyl alpha-D-glucopyranoside. The chain is Xylosidase/arabinosidase 43B from Humicola insolens (Soft-rot fungus).